A 540-amino-acid chain; its full sequence is Phosphoenolpyruvate carboxykinase (ATP) (540 aa).

Arg-65 contacts substrate. At Lys-87 the chain carries N6-acetyllysine. Substrate-binding residues include Tyr-207 and Lys-213. ATP contacts are provided by residues Lys-213, His-232, and 248 to 256; that span reads GLSGTGKTT. Lys-213 and His-232 together coordinate Mn(2+). Asp-269 is a Mn(2+) binding site. Residues Glu-297, Arg-333, 449–450, and Thr-455 contribute to the ATP site; that span reads RI. Arg-333 provides a ligand contact to substrate. Position 523 is an N6-acetyllysine (Lys-523).

This sequence belongs to the phosphoenolpyruvate carboxykinase (ATP) family. In terms of assembly, monomer. It depends on Mn(2+) as a cofactor.

It is found in the cytoplasm. The catalysed reaction is oxaloacetate + ATP = phosphoenolpyruvate + ADP + CO2. It functions in the pathway carbohydrate biosynthesis; gluconeogenesis. In terms of biological role, involved in the gluconeogenesis. Catalyzes the conversion of oxaloacetate (OAA) to phosphoenolpyruvate (PEP) through direct phosphoryl transfer between the nucleoside triphosphate and OAA. The polypeptide is Phosphoenolpyruvate carboxykinase (ATP) (Escherichia coli O157:H7).